The primary structure comprises 335 residues: Trans-3-hydroxy-L-proline dehydratase (335 aa).

Residue Cys91 is the Proton acceptor of the active site. Substrate-binding positions include 92 to 93 (GH) and 256 to 257 (GS).

Belongs to the proline racemase family. As to quaternary structure, homodimer.

It catalyses the reaction trans-3-hydroxy-L-proline = 1-pyrroline-2-carboxylate + H2O. Its pathway is amino-acid degradation. Functionally, catalyzes the dehydration of trans-3-hydroxy-L-proline (t3LHyp) to Delta(1)-pyrroline-2-carboxylate (Pyr2C). Together with LhpI, is involved in a t3LHyp degradation pathway to L-proline, which allows A.brasilense to grow on t3LHyp as a sole carbon source. The sequence is that of Trans-3-hydroxy-L-proline dehydratase from Azospirillum brasilense.